The sequence spans 443 residues: Gasdermin-A2 (443 aa).

A triggers pyroptosis region spans residues 1–249 (MSMFEDVTRA…QGSTVQMISG (249 aa)). 9–13 (RALAR) serves as a coordination point for a cardiolipin. 4 beta stranded membrane-spanning segments follow: residues 78–95 (NFSF…DVEV), 99–120 (MKVK…MLSV), 164–179 (VTLK…FSLN), and 183–197 (LGLQ…AVTI). A coiled-coil region spans residues 249–312 (GEMHEDFKTL…GALDKGHEVT (64 aa)).

Belongs to the gasdermin family. In terms of assembly, homooligomer; homooligomeric ring-shaped pore complex containing 18-36 subunits when inserted in the membrane. In terms of processing, cleavage relieves autoinhibition by releasing the N-terminal moiety (Gasdermin-A2, N-terminal) that initiates pyroptosis. In contrast to Gsdma, not cleaved by bacterial effector protein SpeB. Palmitoylated. In terms of tissue distribution, expressed in the gastrointestinal tract, specifically from the middle to the upper region of the gastric mucosa in the glandular stomach.

Its subcellular location is the cytoplasm. It localises to the perinuclear region. It is found in the cytosol. The protein localises to the cell membrane. The full-length protein before cleavage is inactive: intramolecular interactions between N- and C-terminal domains mediate autoinhibition in the absence of activation signal. The intrinsic pyroptosis-inducing activity is carried by the released N-terminal moiety (Gasdermin-A2, N-terminal). In terms of biological role, this form constitutes the precursor of the pore-forming protein and acts as a sensor of infection: upon bacterial infection, specifically cleaved by some bacterial effector protein, releasing the N-terminal moiety (Gasdermin-A2, N-terminal) that binds to membranes and forms pores, triggering pyroptosis. Functionally, pore-forming protein that causes membrane permeabilization and pyroptosis. Released upon cleavage of Gasdermin-A2, and binds to membrane inner leaflet lipids. Homooligomerizes within the membrane and forms pores of 10-15 nanometers (nm) of inner diameter, triggering pyroptosis. Binds to membrane inner leaflet lipids, such as phosphatidylinositol (4,5)-bisphosphate. This chain is Gasdermin-A2, found in Mus musculus (Mouse).